A 425-amino-acid polypeptide reads, in one-letter code: 3-phosphoshikimate 1-carboxyvinyltransferase (425 aa).

The 3-phosphoshikimate site is built by lysine 21, serine 22, and arginine 26. Residue lysine 21 participates in phosphoenolpyruvate binding. Residues glycine 91 and arginine 119 each coordinate phosphoenolpyruvate. 4 residues coordinate 3-phosphoshikimate: serine 164, glutamine 166, aspartate 311, and lysine 338. Glutamine 166 is a binding site for phosphoenolpyruvate. Aspartate 311 functions as the Proton acceptor in the catalytic mechanism. Positions 342 and 383 each coordinate phosphoenolpyruvate.

Belongs to the EPSP synthase family. As to quaternary structure, monomer.

The protein localises to the cytoplasm. It carries out the reaction 3-phosphoshikimate + phosphoenolpyruvate = 5-O-(1-carboxyvinyl)-3-phosphoshikimate + phosphate. It functions in the pathway metabolic intermediate biosynthesis; chorismate biosynthesis; chorismate from D-erythrose 4-phosphate and phosphoenolpyruvate: step 6/7. Its function is as follows. Catalyzes the transfer of the enolpyruvyl moiety of phosphoenolpyruvate (PEP) to the 5-hydroxyl of shikimate-3-phosphate (S3P) to produce enolpyruvyl shikimate-3-phosphate and inorganic phosphate. The protein is 3-phosphoshikimate 1-carboxyvinyltransferase of Campylobacter fetus subsp. fetus (strain 82-40).